A 623-amino-acid chain; its full sequence is AM-toxin biosynthesis protein 12-2 (623 aa).

The segment at 110-129 is disordered; sequence TIPGTSQAKNTEPDHQASGL.

It functions in the pathway mycotoxin biosynthesis. Functionally, part of the gene clusters that mediate the biosynthesis of AM-toxins, host-selective toxins (HSTs) causing Alternaria blotch on apple, a worldwide distributed disease. AM-toxins are cyclic depsipeptides containing the 3 residues 2-hydroxy-isovaleric acid (2-HIV), dehydroalanine, L-alanine which are common for all 3 AM-toxins I to III. The fourth precursor is L-alpha-amino-methoxyphenyl-valeric acid (L-Amv) for AM-toxin I, L-alpha-amino-phenyl-valeric acid (L-Apv) for AM-toxin II, and L-alpha-amino-hydroxyphenyl-valeric acid (L-Ahv) for AM-toxin III. AM-toxins have two target sites for affecting susceptible apple cells; they cause invagination of the plasma membrane and electrolyte loss and chloroplast disorganization. The non-ribosomal peptide synthetase AMT1 contains 4 catalytic modules and is responsible for activation of each residue in AM-toxin. The aldo-keto reductase AMT2 catalyzes the conversion of 2-keto-isovaleric acid (2-KIV) to 2-hydroxy-isovaleric acid (2-HIV), one of the precursor residues incorporated by AMT1 during AM-toxin biosynthesis, by reduction of its ketone to an alcohol. The cytochrome P450 monooxygenase AMT3 and the thioesterase AMT4 are also important for AM-toxin production, but their exact function within the AM-toxin biosynthesis are not known yet. Up to 21 proteins (including AMT1 to AMT4) are predicted to be involved in AM-toxin biosynthesis since their expression ishighly up-regulated in AM-toxin-producing cultures. The sequence is that of AM-toxin biosynthesis protein 12-2 from Alternaria alternata (Alternaria rot fungus).